Consider the following 258-residue polypeptide: MVLIRVLANLLILQLSYAQKSSELVVGGDECNINEHRSLVAIFNSTEFFCSGTLINQEWVVTAAHCDSTNFKMKLGVHSKKVPNEDEQTRNPKEKFFCPNKKKDDVLDKDIMLIKLDSPVSNSEHIAPLSLPSSPPSVGSVCHIMGWGSITPIEKTLPDVPYCANIKLLDDAVCQPPYPELPATSRTLCAGIPEGGKDTCGGDSGGPLICNGQFQGIVFYGAHPCGQALKPGVYTKVFDYNDWIQSIIAGNTAATCPP.

The N-terminal stretch at 1 to 18 (MVLIRVLANLLILQLSYA) is a signal peptide. The propeptide occupies 19–24 (QKSSEL). In terms of domain architecture, Peptidase S1 spans 25-249 (VVGGDECNIN…YNDWIQSIIA (225 aa)). 6 disulfides stabilise this stretch: Cys-31–Cys-163, Cys-50–Cys-66, Cys-98–Cys-256, Cys-142–Cys-210, Cys-174–Cys-189, and Cys-200–Cys-225. An N-linked (GlcNAc...) asparagine glycan is attached at Asn-44. Active-site charge relay system residues include His-65 and Asp-110. The active-site Charge relay system is Ser-204.

Belongs to the peptidase S1 family. Snake venom subfamily. In terms of assembly, monomer. Expressed by the venom gland.

Its subcellular location is the secreted. In terms of biological role, snake venom serine protease that may act in the hemostasis system of the prey. The polypeptide is Snake venom serine protease catroxase-2 (Crotalus atrox (Western diamondback rattlesnake)).